The following is a 258-amino-acid chain: Indole-3-glycerol phosphate synthase (258 aa).

This sequence belongs to the TrpC family.

The enzyme catalyses 1-(2-carboxyphenylamino)-1-deoxy-D-ribulose 5-phosphate + H(+) = (1S,2R)-1-C-(indol-3-yl)glycerol 3-phosphate + CO2 + H2O. The protein operates within amino-acid biosynthesis; L-tryptophan biosynthesis; L-tryptophan from chorismate: step 4/5. This chain is Indole-3-glycerol phosphate synthase, found in Geobacillus thermodenitrificans (strain NG80-2).